Here is a 395-residue protein sequence, read N- to C-terminus: Tyrosine--tRNA ligase 2 (395 aa).

The short motif at 42–51 is the 'HIGH' region element; the sequence is PTAPDIHLGH. The short motif at 226-230 is the 'KMSKS' region element; it reads KMSKS. Lys229 is an ATP binding site. The S4 RNA-binding domain maps to 334 to 394; sequence IAISNLLKEA…GKRKFARVTI (61 aa).

It belongs to the class-I aminoacyl-tRNA synthetase family. TyrS type 2 subfamily. In terms of assembly, homodimer.

It is found in the cytoplasm. It carries out the reaction tRNA(Tyr) + L-tyrosine + ATP = L-tyrosyl-tRNA(Tyr) + AMP + diphosphate + H(+). Its function is as follows. Catalyzes the attachment of tyrosine to tRNA(Tyr) in a two-step reaction: tyrosine is first activated by ATP to form Tyr-AMP and then transferred to the acceptor end of tRNA(Tyr). The protein is Tyrosine--tRNA ligase 2 of Vibrio cholerae serotype O1 (strain ATCC 39315 / El Tor Inaba N16961).